The following is a 453-amino-acid chain: Ankyrin repeat and SOCS box protein 16 (453 aa).

7 ANK repeats span residues 56–85 (CRDP…AANM), 110–139 (KQTA…ELDA), 142–171 (GGRA…KANV), 175–204 (EGMT…SVNV), 209–238 (SEVT…DVAL), 242–279 (QGET…DPQA), and 283–312 (KRHT…SPGV). The 57-residue stretch at 397–453 (FYSSALSMENQPRQLQHLARLAVRAQLGSHCRQAAAQLPLPPLLRDYLLLGVEGRIQ) folds into the SOCS box domain.

The protein belongs to the ankyrin SOCS box (ASB) family.

Its pathway is protein modification; protein ubiquitination. Functionally, may be a substrate-recognition component of a SCF-like ECS (Elongin-Cullin-SOCS-box protein) E3 ubiquitin-protein ligase complex which mediates the ubiquitination and subsequent proteasomal degradation of target proteins. The sequence is that of Ankyrin repeat and SOCS box protein 16 (Asb16) from Mus musculus (Mouse).